A 96-amino-acid polypeptide reads, in one-letter code: Cytochrome c-553 (96 aa).

Positions 1–19 (MKKVIVALGVLAFANVLMA) are cleaved as a signal peptide. 4 residues coordinate heme c: Cys-29, Cys-32, His-33, and Met-73.

The protein belongs to the cytochrome c family. In terms of processing, binds 1 heme c group covalently per subunit.

It is found in the periplasm. Functionally, natural electron acceptor for a formate dehydrogenase. This is Cytochrome c-553 from Helicobacter pylori (strain J99 / ATCC 700824) (Campylobacter pylori J99).